Here is a 246-residue protein sequence, read N- to C-terminus: Pyridoxine 5'-phosphate synthase (246 aa).

Positions 8 and 19 each coordinate 3-amino-2-oxopropyl phosphate. The active-site Proton acceptor is the His44. Positions 46 and 51 each coordinate 1-deoxy-D-xylulose 5-phosphate. Glu76 acts as the Proton acceptor in catalysis. Thr106 provides a ligand contact to 1-deoxy-D-xylulose 5-phosphate. His198 functions as the Proton donor in the catalytic mechanism. Residues Asp199 and 221-222 (GH) each bind 3-amino-2-oxopropyl phosphate.

It belongs to the PNP synthase family. Homooctamer; tetramer of dimers.

It is found in the cytoplasm. It catalyses the reaction 3-amino-2-oxopropyl phosphate + 1-deoxy-D-xylulose 5-phosphate = pyridoxine 5'-phosphate + phosphate + 2 H2O + H(+). The protein operates within cofactor biosynthesis; pyridoxine 5'-phosphate biosynthesis; pyridoxine 5'-phosphate from D-erythrose 4-phosphate: step 5/5. In terms of biological role, catalyzes the complicated ring closure reaction between the two acyclic compounds 1-deoxy-D-xylulose-5-phosphate (DXP) and 3-amino-2-oxopropyl phosphate (1-amino-acetone-3-phosphate or AAP) to form pyridoxine 5'-phosphate (PNP) and inorganic phosphate. This Brucella abortus (strain S19) protein is Pyridoxine 5'-phosphate synthase.